The sequence spans 237 residues: 4-hydroxy-tetrahydrodipicolinate reductase (237 aa).

Residues 11–16 (GASGRM), 92–94 (GTT), and 116–119 (GSNF) each bind NAD(+). H148 acts as the Proton donor/acceptor in catalysis. Residue H149 coordinates (S)-2,3,4,5-tetrahydrodipicolinate. K152 functions as the Proton donor in the catalytic mechanism. 158 to 159 (GS) provides a ligand contact to (S)-2,3,4,5-tetrahydrodipicolinate.

This sequence belongs to the DapB family.

Its subcellular location is the cytoplasm. It carries out the reaction (S)-2,3,4,5-tetrahydrodipicolinate + NAD(+) + H2O = (2S,4S)-4-hydroxy-2,3,4,5-tetrahydrodipicolinate + NADH + H(+). It catalyses the reaction (S)-2,3,4,5-tetrahydrodipicolinate + NADP(+) + H2O = (2S,4S)-4-hydroxy-2,3,4,5-tetrahydrodipicolinate + NADPH + H(+). Its pathway is amino-acid biosynthesis; L-lysine biosynthesis via DAP pathway; (S)-tetrahydrodipicolinate from L-aspartate: step 4/4. Its function is as follows. Catalyzes the conversion of 4-hydroxy-tetrahydrodipicolinate (HTPA) to tetrahydrodipicolinate. This chain is 4-hydroxy-tetrahydrodipicolinate reductase, found in Xylella fastidiosa (strain M12).